The primary structure comprises 142 residues: NTF2-related export protein 2 (142 aa).

Residues 17–136 form the NTF2 domain; sequence AAEEFVNIYY…WKIASDCFRF (120 aa).

Associates with NXF1, NXF2, NXF3 and NXF5.

It is found in the nucleus. Its subcellular location is the cytoplasm. Its function is as follows. Regulator of protein export for NES-containing proteins. Also plays a role in mRNA nuclear export. In Homo sapiens (Human), this protein is NTF2-related export protein 2.